The following is a 348-amino-acid chain: Methylthioribose-1-phosphate isomerase (348 aa).

Residues 51–53, Arg94, and Gln199 contribute to the substrate site; that span reads RGA. Asp240 functions as the Proton donor in the catalytic mechanism. 250 to 251 contributes to the substrate binding site; it reads NK.

The protein belongs to the eIF-2B alpha/beta/delta subunits family. MtnA subfamily.

The enzyme catalyses 5-(methylsulfanyl)-alpha-D-ribose 1-phosphate = 5-(methylsulfanyl)-D-ribulose 1-phosphate. It participates in amino-acid biosynthesis; L-methionine biosynthesis via salvage pathway; L-methionine from S-methyl-5-thio-alpha-D-ribose 1-phosphate: step 1/6. In terms of biological role, catalyzes the interconversion of methylthioribose-1-phosphate (MTR-1-P) into methylthioribulose-1-phosphate (MTRu-1-P). The polypeptide is Methylthioribose-1-phosphate isomerase (Nitrosococcus oceani (strain ATCC 19707 / BCRC 17464 / JCM 30415 / NCIMB 11848 / C-107)).